The following is a 130-amino-acid chain: Transcription antitermination protein NusB (130 aa).

Belongs to the NusB family.

Involved in transcription antitermination. Required for transcription of ribosomal RNA (rRNA) genes. Binds specifically to the boxA antiterminator sequence of the ribosomal RNA (rrn) operons. This Bacillus velezensis (strain DSM 23117 / BGSC 10A6 / LMG 26770 / FZB42) (Bacillus amyloliquefaciens subsp. plantarum) protein is Transcription antitermination protein NusB.